The chain runs to 180 residues: Orotate phosphoribosyltransferase (180 aa).

Residues Arg-95, Lys-96, Lys-99, and 121–129 (EDVTTTGGS) contribute to the 5-phospho-alpha-D-ribose 1-diphosphate site. Orotate is bound by residues Thr-125 and Arg-153.

The protein belongs to the purine/pyrimidine phosphoribosyltransferase family. PyrE subfamily. In terms of assembly, homodimer. It depends on Mg(2+) as a cofactor.

It catalyses the reaction orotidine 5'-phosphate + diphosphate = orotate + 5-phospho-alpha-D-ribose 1-diphosphate. The protein operates within pyrimidine metabolism; UMP biosynthesis via de novo pathway; UMP from orotate: step 1/2. Its function is as follows. Catalyzes the transfer of a ribosyl phosphate group from 5-phosphoribose 1-diphosphate to orotate, leading to the formation of orotidine monophosphate (OMP). The chain is Orotate phosphoribosyltransferase from Methanothermobacter thermautotrophicus (strain ATCC 29096 / DSM 1053 / JCM 10044 / NBRC 100330 / Delta H) (Methanobacterium thermoautotrophicum).